The primary structure comprises 169 residues: UPF0251 protein MM_2090 (169 aa).

This sequence belongs to the UPF0251 family.

The sequence is that of UPF0251 protein MM_2090 from Methanosarcina mazei (strain ATCC BAA-159 / DSM 3647 / Goe1 / Go1 / JCM 11833 / OCM 88) (Methanosarcina frisia).